Here is a 327-residue protein sequence, read N- to C-terminus: S-adenosylmethionine/S-adenosylhomocysteine transporter (327 aa).

10 helical membrane passes run 22–42 (CDMA…SFAL), 53–73 (LFVT…LLLC), 85–105 (IMPI…LEFI), 114–134 (TACF…YVQL), 143–163 (LGGL…GGSE), 165–185 (VAEW…ATCL), 202–222 (SLSM…LSLI), 240–260 (LFLQ…YNLF), 271–291 (FLSF…WLLL), and 294–314 (SFPP…RLIY). The region spanning 34 to 157 (FIWSSSFALS…LGLVSYLVYL (124 aa)) is the EamA 1 domain. Residues 189–313 (GWTLLRKLGR…GFMVLGCRLI (125 aa)) enclose the EamA 2 domain.

This sequence belongs to the drug/metabolite transporter (DMT) superfamily. 10 TMS drug/metabolite exporter (DME) (TC 2.A.7.3) family.

It localises to the cell membrane. Its function is as follows. Transports S-adenosylmethionine (SAM) and S-adenosylhomocysteine (SAH). Allows bacteria to acquire SAM from the eukaryotic host cell and to likely remove the toxic by-product SAH. The sequence is that of S-adenosylmethionine/S-adenosylhomocysteine transporter from Chlamydia trachomatis serovar D (strain ATCC VR-885 / DSM 19411 / UW-3/Cx).